Here is a 3739-residue protein sequence, read N- to C-terminus: Cardiomyopathy-associated protein 5 (3739 aa).

13 disordered regions span residues 1 to 205, 268 to 814, 835 to 884, 967 to 1270, 1288 to 1313, 1325 to 1637, 1650 to 1969, 1986 to 2016, 2065 to 2246, 2273 to 2318, 2377 to 2498, 2513 to 2532, and 2579 to 2616; these read MESG…PPIT, SLEP…SAFV, VSVS…AIQS, LSED…SDVP, TQAS…RDAK, SSAL…NLVS, EMNR…EKGK, SSIP…AIEP, FLSN…WETR, AVGE…LALD, VYPE…SAVE, KKQE…TSKD, and SADG…SEDQ. Acidic residues predominate over residues 18-47; sequence ADEEVAQELETEEESEGEGEETAAESEEEP. Residues 48 to 62 show a composition bias toward basic and acidic residues; the sequence is DARLSDEDEEGKTKQ. Residues 84-106 show a composition bias toward polar residues; sequence TWETNSSRSSTPWASGESQTSGI. Positions 130 to 153 are enriched in basic residues; the sequence is RTRKRTQKSKRGSPSLRRKGSKKR. Ser155 bears the Phosphoserine mark. Composition is skewed to polar residues over residues 156-175 and 325-336; these read LESQ…SESP and ADSNLNVPSSTE. A coiled-coil region spans residues 380 to 406; the sequence is ATMVLERAKEELEQNAQGKESSEDDAS. Composition is skewed to basic and acidic residues over residues 479 to 637, 644 to 663, and 670 to 730; these read IVHR…REEE, SIVH…REEE, and SIVH…ERGV. 2 consecutive repeat copies span residues 482 to 493 and 494 to 505. The 20 X 12 AA approximate tandem repeats of R-[DE]-[EK]-[EG]-H-[AV]-P-E-[PS]-[IM]-V-[HLR] stretch occupies residues 482–720; that stretch reads REEEHAPEPI…EEHAPEPMVH (239 aa). Residues 506 to 519 form a 3; approximate repeat; that stretch reads REEEHAPEPESIVH. The stretch at 520–531 is repeat 4; that stretch reads REEEHAPESIVH. A 5; approximate repeat occupies 532 to 545; that stretch reads REEEHAPEPVPIVH. The stretch at 546-559 is one 6; approximate repeat; it reads REEEHAPEPESIVH. 4 consecutive repeat copies span residues 560-571, 572-583, 584-595, and 596-607. One copy of the 11; approximate repeat lies at 608–621; the sequence is REEEHVPEPESIVR. The stretch at 622-633 is one 12; approximate repeat; the sequence is KGEEHAPEPIVH. Residues 634 to 647 form a 14; approximate repeat; it reads REEEQVPEPESIVH. Copy 15 of the repeat occupies 648 to 659; it reads REEEHAPEPIVH. One copy of the 16; approximate repeat lies at 660-673; it reads REEEQVPEPESIVH. Tandem repeats lie at residues 674–685, 686–696, 697–708, and 709–720. A compositionally biased stretch (acidic residues) spans 740–756; sequence TEPEDSSLEEEIIELDY. Ser850 is subject to Phosphoserine. 2 stretches are compositionally biased toward polar residues: residues 861–884 and 1151–1161; these read PAMT…AIQS and CLTSPSEQTVL. Basic and acidic residues-rich tracts occupy residues 1188–1197 and 1230–1242; these read AETEQNKVEP and EHSE…EESS. Residues 1337-1351 are compositionally biased toward polar residues; it reads TSVLPTSQPSVSPES. 2 stretches are compositionally biased toward basic and acidic residues: residues 1441–1460 and 1476–1486; these read LEQR…HSPP and TEVKQESKITR. Residues 1522 to 1540 show a composition bias toward polar residues; the sequence is ASSSATTVPVTKLDSNSTK. 6 stretches are compositionally biased toward basic and acidic residues: residues 1620–1631, 1697–1706, 1726–1742, 1760–1770, 1786–1803, and 1836–1850; these read NDKHEEITRSPD, IDSRDRDRSL, GPAE…ENRK, IEQKEPKRTLH, DKPE…ENLE, and EKPD…DRKP. The segment covering 1854 to 1863 has biased composition (polar residues); sequence QLESSESTDL. 4 stretches are compositionally biased toward basic and acidic residues: residues 1874 to 1885, 1896 to 1916, 1992 to 2001, and 2153 to 2165; these read DTDHTSETRNQE, LSQE…EGRK, KVSDNEDLET, and ARKE…HKET. Over residues 2181 to 2190 the composition is skewed to polar residues; that stretch reads KSAQSAFTRM. Ser2192 carries the phosphoserine modification. Composition is skewed to basic and acidic residues over residues 2212 to 2244, 2279 to 2299, 2306 to 2318, 2377 to 2419, and 2429 to 2448; these read GEDR…DGWE, RMPE…RLEQ, KLME…LALD, VYPE…ETDG, and ELEK…RRFV. A Phosphoserine modification is found at Ser2411. At Ser2495 the chain carries Phosphoserine. The span at 2513–2523 shows a compositional bias: basic and acidic residues; that stretch reads KKQETWSDRPT. Positions 2640 to 2664 form a coiled coil; sequence SVDQEESEQMQDKLQYLEEKASFKS. Disordered stretches follow at residues 2667–2725, 2742–2773, 2791–2835, 2881–2959, 3027–3047, and 3111–3174; these read VHDE…QPTV, LSPG…SSAE, GPEK…GMPL, EKNE…EREI, LESE…DVNL, and PEEP…QKEP. Residues 2682 to 2709 are compositionally biased toward basic and acidic residues; that stretch reads SKLEVPDRKITSLKENKTKETHKTKEEI. The required for RYR2 clustering stretch occupies residues 2731 to 3041; it reads YFEKYTLIDY…SSQGNEAGNA (311 aa). The span at 2762–2773 shows a compositional bias: polar residues; it reads KTLTSFPESSAE. Composition is skewed to basic and acidic residues over residues 2791–2804 and 2812–2828; these read GPEK…HAEM and KPDD…DVDS. The residue at position 2905 (Ser2905) is a Phosphoserine. A compositionally biased stretch (basic and acidic residues) spans 2918–2929; that stretch reads YILKDDILHDES. Polar residues predominate over residues 3030 to 3047; sequence EPSSQGNEAGNASPDVNL. The span at 3153-3162 shows a compositional bias: basic and acidic residues; sequence VWDRTEDQSA. The tract at residues 3187–3214 is amphipathic helix H1; sequence KSLVSEMDKALDIHKDHEVSALDTAISA. The interval 3215–3342 is B-box coiled-coil; BBC; the sequence is VKVQLGEFLE…ERLLSAMEST (128 aa). Residues 3244–3323 are a coiled coil; it reads FNTIEEKCSK…REAEELDETV (80 aa). Positions 3301 to 3318 are amphipathic helix H2; the sequence is SMDTAKDTLETIVREAEE. Fibronectin type-III domains follow at residues 3374–3475 and 3476–3568; these read VPQP…TAPS and TPVI…TRGT. The interval 3421 to 3437 is amphipathic helix H3; the sequence is EINELVEEYRLTVKESC. The B30.2/SPRY domain occupies 3550-3735; the sequence is NASGTSEQSE…LHLGLEPPDS (186 aa).

Interacts with PRKAR2A. Interacts with ACTN2, DES and DTNBP1/dysbindin. Interacts with DMD/dystrophin. Interacts with the calcineurin catalytic subunit PPP3CA. Interacts with TTN. Interacts with CAPN3; this interaction, which results in CMYA5 proteolysis, may protect CAPN3 from autolysis. Interacts with FSD2. In cardiac muscles, identified in a complex composed of FSD2, CMYA5 and RYR2. Post-translationally, phosphorylated by PKA. In terms of tissue distribution, expressed in skin as well as in cardiac muscle. Expressed in skeletal muscle (at protein level).

Its subcellular location is the nucleus. It localises to the cytoplasm. The protein localises to the perinuclear region. The protein resides in the myofibril. It is found in the sarcomere. Its subcellular location is the m line. It localises to the sarcoplasmic reticulum. Functionally, may serve as an anchoring protein that mediates the subcellular compartmentation of protein kinase A (PKA) via binding to PRKAR2A. May attenuate calcineurin ability to induce slow-fiber gene program in muscle and may negatively modulate skeletal muscle regeneration. Plays a role in the assembly of ryanodine receptor (RYR2) clusters in striated muscle. The chain is Cardiomyopathy-associated protein 5 (Cmya5) from Mus musculus (Mouse).